Reading from the N-terminus, the 526-residue chain is Glutamate--cysteine ligase (526 aa).

This sequence belongs to the glutamate--cysteine ligase type 1 family. Type 1 subfamily.

It carries out the reaction L-cysteine + L-glutamate + ATP = gamma-L-glutamyl-L-cysteine + ADP + phosphate + H(+). It functions in the pathway sulfur metabolism; glutathione biosynthesis; glutathione from L-cysteine and L-glutamate: step 1/2. This is Glutamate--cysteine ligase from Proteus mirabilis (strain HI4320).